Consider the following 380-residue polypeptide: Cytochrome b (380 aa).

4 helical membrane-spanning segments follow: residues 33–53 (FGSL…FLAM), 77–98 (WLIR…FIHV), 113–133 (WNIG…GYVL), and 178–198 (FFAF…VHLL). 2 residues coordinate heme b: H83 and H97. Heme b-binding residues include H182 and H196. H201 contacts a ubiquinone. The next 4 helical transmembrane spans lie at 226–246 (IKDI…VLFF), 288–308 (LGGV…PLIN), 320–340 (ITQA…WIGG), and 347–367 (FTMI…MFMF).

It belongs to the cytochrome b family. As to quaternary structure, the cytochrome bc1 complex contains 11 subunits: 3 respiratory subunits (MT-CYB, CYC1 and UQCRFS1), 2 core proteins (UQCRC1 and UQCRC2) and 6 low-molecular weight proteins (UQCRH/QCR6, UQCRB/QCR7, UQCRQ/QCR8, UQCR10/QCR9, UQCR11/QCR10 and a cleavage product of UQCRFS1). This cytochrome bc1 complex then forms a dimer. Heme b is required as a cofactor.

It localises to the mitochondrion inner membrane. Its function is as follows. Component of the ubiquinol-cytochrome c reductase complex (complex III or cytochrome b-c1 complex) that is part of the mitochondrial respiratory chain. The b-c1 complex mediates electron transfer from ubiquinol to cytochrome c. Contributes to the generation of a proton gradient across the mitochondrial membrane that is then used for ATP synthesis. The polypeptide is Cytochrome b (MT-CYB) (Calomys musculinus (Drylands vesper mouse)).